A 194-amino-acid polypeptide reads, in one-letter code: Phosphoheptose isomerase (194 aa).

The SIS domain maps to 37-194; sequence IADTFKAGGK…LIEKEMVAQG (158 aa). Residue 52-54 coordinates substrate; it reads NGG. Zn(2+) is bound by residues H61 and E65. Substrate-binding positions include E65, 93-94, 119-121, S124, and Q172; these read ND and STS. Q172 and H180 together coordinate Zn(2+).

This sequence belongs to the SIS family. GmhA subfamily. In terms of assembly, homotetramer. Zn(2+) is required as a cofactor.

It is found in the cytoplasm. The catalysed reaction is 2 D-sedoheptulose 7-phosphate = D-glycero-alpha-D-manno-heptose 7-phosphate + D-glycero-beta-D-manno-heptose 7-phosphate. It participates in carbohydrate biosynthesis; D-glycero-D-manno-heptose 7-phosphate biosynthesis; D-glycero-alpha-D-manno-heptose 7-phosphate and D-glycero-beta-D-manno-heptose 7-phosphate from sedoheptulose 7-phosphate: step 1/1. Its function is as follows. Catalyzes the isomerization of sedoheptulose 7-phosphate in D-glycero-D-manno-heptose 7-phosphate. This is Phosphoheptose isomerase from Sodalis glossinidius (strain morsitans).